Reading from the N-terminus, the 119-residue chain is MARIKGGLATHKRHKKVLALTKGHASTRHSLFKRAHESMVHAMSYAFAHRRARKGDMRRLWITRINAAARAEGLTYGELISGLKVAGIDINRKVLADMAISDTVAFAAVAAKAAAAKAN.

Belongs to the bacterial ribosomal protein bL20 family.

Binds directly to 23S ribosomal RNA and is necessary for the in vitro assembly process of the 50S ribosomal subunit. It is not involved in the protein synthesizing functions of that subunit. This is Large ribosomal subunit protein bL20 from Dehalococcoides mccartyi (strain ATCC BAA-2100 / JCM 16839 / KCTC 5957 / BAV1).